Here is a 565-residue protein sequence, read N- to C-terminus: 13S globulin seed storage protein 1 (565 aa).

The signal sequence occupies residues 1-20 (MSTKLILSFSLCLMVLSCSA). Intrachain disulfides connect Cys-44–Cys-77 and Cys-120–Cys-384. The Cupin type-1 1 domain maps to 49 to 331 (LTASEPSRRV…FRNVDQETIS (283 aa)). Disordered stretches follow at residues 126 to 224 (SESE…IRDG), 271 to 301 (GQSK…SDDD), and 356 to 376 (EYEE…SGRS). 3 stretches are compositionally biased toward basic and acidic residues: residues 137–224 (RDQR…IRDG), 275–297 (QSRE…QSRE), and 356–370 (EYEE…DRKR). The region spanning 390–539 (QNVNRPSRAD…SYDISTKEAF (150 aa)) is the Cupin type-1 2 domain.

This sequence belongs to the 11S seed storage protein (globulins) family. In terms of assembly, hexamer; each subunit is composed of an acidic and a basic chain derived from a single precursor and linked by a disulfide bond. As to expression, expressed only in immature seeds.

Its function is as follows. Seed storage protein. This is 13S globulin seed storage protein 1 (FA02) from Fagopyrum esculentum (Common buckwheat).